The sequence spans 727 residues: Iron-sulfur clusters transporter atm1, mitochondrial (727 aa).

The segment at 46-97 (NSPLRKDASKEPALASNSKTTNPIPTQASASVNPPKDARNATTAKKDLLSET) is disordered. The span at 60–77 (ASNSKTTNPIPTQASASV) shows a compositional bias: polar residues. Residues 81–94 (KDARNATTAKKDLL) show a composition bias toward basic and acidic residues. A helical transmembrane segment spans residues 131-152 (VGTALSLLVGAKILNVEVPFYF). The ABC transmembrane type-1 domain maps to 131-421 (VGTALSLLVG…LGSVYRELRQ (291 aa)). The Mitochondrial intermembrane portion of the chain corresponds to 153 to 175 (KSIVDSMNIDFATVGGTAYTVAG). The helical transmembrane segment at 176 to 199 (SMIIAYGVTRIGATLFQELRNAVF) threads the bilayer. Over 200–248 (ASVAQKAIRRVARNVFEHLLRLDLNFHLSRQTGGLTRAIDRGTKGISFL) the chain is Mitochondrial matrix. Residues 249–272 (LTSMVFHVVPTALEISLVCGILTY) traverse the membrane as a helical segment. A topological domain (mitochondrial intermembrane) is located at residue Gln-273. Residues 274 to 294 (YGFQFAAITAATMVAYTAFTI) form a helical membrane-spanning segment. Topologically, residues 295–360 (TTTAWRTKFR…ASIKVTTSLA (66 aa)) are mitochondrial matrix. Residues 300–304 (RTKFR) and 363–366 (NSGQ) each bind glutathione. The helical transmembrane segment at 361–379 (FLNSGQNMIFSSALAAMMY) threads the bilayer. The Mitochondrial intermembrane segment spans residues 380-394 (LAANGVANGNLTVGD). Residues 395-416 (LVMVNQLVFQLSVPLNFLGSVY) traverse the membrane as a helical segment. Residue Gly-413 participates in glutathione binding. At 417-727 (RELRQSLLDM…DMAPGPKAQQ (311 aa)) the chain is on the mitochondrial matrix side. The region spanning 456–692 (IRFENVTFGY…NGIYAELWNA (237 aa)) is the ABC transporter domain. ATP-binding positions include Tyr-465 and 489-500 (GPSGCGKSTILR). Positions 702 to 719 (EFERETERDDVESKERDM) are enriched in basic and acidic residues. The disordered stretch occupies residues 702–727 (EFERETERDDVESKERDMAPGPKAQQ).

Belongs to the ABC transporter superfamily. ABCB family. Heavy Metal importer (TC 3.A.1.210) subfamily. Homodimer.

It is found in the mitochondrion inner membrane. In terms of biological role, performs an essential function in the generation of cytoplasmic iron-sulfur proteins by mediating the ATP-dependent export of Fe/S cluster precursors synthesized by nfs1 and other mitochondrial proteins. Hydrolyzes ATP. Binds glutathione and may function by transporting a glutathione-conjugated iron-sulfur compound. In Aspergillus fumigatus (strain ATCC MYA-4609 / CBS 101355 / FGSC A1100 / Af293) (Neosartorya fumigata), this protein is Iron-sulfur clusters transporter atm1, mitochondrial.